The following is a 145-amino-acid chain: Angiogenin (145 aa).

Residues 1–24 (MAISPGPLFLIFVLGLVVIPPTLA) form the signal peptide. At glutamine 25 the chain carries Pyrrolidone carboxylic acid. The active-site Proton acceptor is the histidine 37. Arginine 45 and aspartate 46 together coordinate tRNA. Intrachain disulfides connect cysteine 50–cysteine 104, cysteine 63–cysteine 115, and cysteine 81–cysteine 130. The Nucleolar localization signal motif lies at 55–59 (KRRSL). Cysteine 104 and valine 126 together coordinate tRNA. Residue histidine 137 is the Proton donor of the active site.

Belongs to the pancreatic ribonuclease family. In terms of assembly, homodimer. Interacts with RNH1; inhibiting ANG ribonuclease activity. Interacts with PCNA.

The protein resides in the secreted. It localises to the nucleus. Its subcellular location is the nucleolus. The protein localises to the cytoplasm. It is found in the stress granule. Its activity is regulated as follows. Has weak tRNA ribonuclease activity by itself due to partial autoinhibition by its C-terminus (residues 139-145), which folds into a short alpha-helix that partially occludes the substrate-binding site. In absence of stress, the ribonuclease activity is inhibited by RNH1 in the cytoplasm. In response to stress, dissociates from RNH1 in the cytoplasm and associates with cytoplasmic ribosomes with vacant A-sites: ribosomes directly activate the tRNA ribonuclease activity of ANG by refolding the C-terminal alpha-helix. In response to stress, the angiogenic activity of ANG is inhibited by RNH1 in the nucleus. Secreted ribonuclease that can either promote or restrict cell proliferation of target cells, depending on the context. Endocytosed in target cells via its receptor PLXNB2 and translocates to the cytoplasm or nucleus. Under stress conditions, localizes to the cytoplasm and promotes the assembly of stress granules (SGs): specifically cleaves a subset of tRNAs within anticodon loops to produce tRNA-derived stress-induced fragments (tiRNAs), resulting in translation repression and inhibition of cell proliferation. tiRNas also prevent formation of apoptosome, thereby promoting cell survival. Preferentially cleaves RNAs between a pyrimidine and an adenosine residue, suggesting that it cleaves the anticodon loop of tRNA(Ala) (32-UUAGCAU-38) after positions 33 and 36. Cleaves a subset of tRNAs, including tRNA(Ala), tRNA(Glu), tRNA(Gly), tRNA(Lys), tRNA(Val), tRNA(His), tRNA(Asp) and tRNA(Sec). Under growth conditions and in differentiated cells, translocates to the nucleus and stimulates ribosomal RNA (rRNA) transcription, including that containing the initiation site sequences of 45S rRNA, thereby promoting cell growth and proliferation. Angiogenin induces vascularization of normal and malignant tissues via its ability to promote rRNA transcription. Involved in hematopoietic stem and progenitor cell (HSPC) growth and survival by promoting rRNA transcription in growth conditions and inhibiting translation in response to stress, respectively. Mediates the crosstalk between myeloid and intestinal epithelial cells to protect the intestinal epithelial barrier integrity: secreted by myeloid cells and promotes intestinal epithelial cells proliferation and survival. Also mediates osteoclast-endothelial cell crosstalk in growing bone: produced by osteoclasts and protects the neighboring vascular cells against senescence by promoting rRNA transcription. This Mus musculus (Mouse) protein is Angiogenin.